The sequence spans 402 residues: Secreted RxLR effector protein 73 (402 aa).

The first 23 residues, 1 to 23, serve as a signal peptide directing secretion; that stretch reads MRLLHVVVATVSLTGAITSLIAA. A glycan (N-linked (GlcNAc...) asparagine) is linked at Asn-27. A RxLR motif is present at residues 104–107; the sequence is RVLR. Residues Asn-111, Asn-134, Asn-143, Asn-165, and Asn-286 are each glycosylated (N-linked (GlcNAc...) asparagine).

Belongs to the RxLR effector family.

The protein resides in the secreted. It localises to the host cell. Secreted effector that completely suppresses the host cell death induced by cell death-inducing proteins. The protein is Secreted RxLR effector protein 73 of Plasmopara viticola (Downy mildew of grapevine).